The sequence spans 410 residues: Putative F-box/kelch-repeat protein At1g15680 (410 aa).

The region spanning 13 to 58 (CKRRIELPEELLAEIVARLPFISITRFKSVCKGWRSLIESTYFRHL) is the F-box domain. Kelch repeat units follow at residues 177 to 227 (VVCM…SLKK) and 274 to 327 (AYTT…YFPV).

This Arabidopsis thaliana (Mouse-ear cress) protein is Putative F-box/kelch-repeat protein At1g15680.